The primary structure comprises 273 residues: 2-dehydro-3-deoxyphosphooctonate aldolase (273 aa).

The protein belongs to the KdsA family.

The protein resides in the cytoplasm. It carries out the reaction D-arabinose 5-phosphate + phosphoenolpyruvate + H2O = 3-deoxy-alpha-D-manno-2-octulosonate-8-phosphate + phosphate. It participates in carbohydrate biosynthesis; 3-deoxy-D-manno-octulosonate biosynthesis; 3-deoxy-D-manno-octulosonate from D-ribulose 5-phosphate: step 2/3. It functions in the pathway bacterial outer membrane biogenesis; lipopolysaccharide biosynthesis. The chain is 2-dehydro-3-deoxyphosphooctonate aldolase from Cyanothece sp. (strain PCC 7425 / ATCC 29141).